Consider the following 560-residue polypeptide: Interferon alpha/beta receptor 1 (560 aa).

Residues 1-24 (MLSLLGATTLMLVAGRWVLPAASG) form the signal peptide. The Extracellular portion of the chain corresponds to 25–437 (EANLKSENVE…EKTKPGNTSK (413 aa)). 2 N-linked (GlcNAc...) asparagine glycosylation sites follow: Asn-47 and Asn-55. A disulfide bridge connects residues Cys-76 and Cys-84. Asn-85, Asn-108, Asn-109, and Asn-172 each carry an N-linked (GlcNAc...) asparagine glycan. 3 consecutive Fibronectin type-III domains span residues 126–226 (QIGP…TTER), 231–329 (SPEN…TEVK), and 333–433 (FPPV…TKPG). Cys-199 and Cys-220 are joined by a disulfide. Residues Asn-222, Asn-285, Asn-313, Asn-359, and Asn-377 are each glycosylated (N-linked (GlcNAc...) asparagine). Cysteines 283 and 291 form a disulfide. Cys-404 and Cys-427 are joined by a disulfide. The N-linked (GlcNAc...) asparagine glycan is linked to Asn-434. The chain crosses the membrane as a helical span at residues 438-458 (TWLIAGICTALFSILVVIYVV). Topologically, residues 459–560 (RVFLRCVKYV…SEEFLQQDSV (102 aa)) are cytoplasmic. A lipid anchor (S-palmitoyl cysteine) is attached at Cys-464. 2 positions are modified to phosphotyrosine; by TYK2: Tyr-467 and Tyr-482. The interval 492 to 501 (LLSTSEEQTE) is important for interaction with TYK2. A phosphoserine mark is found at Ser-496 and Ser-536. The segment at 524-560 (VHEEYNSQASQDSGNYSNEDENSGSKISEEFLQQDSV) is disordered. Over residues 529-540 (NSQASQDSGNYS) the composition is skewed to polar residues.

Belongs to the type II cytokine receptor family. In terms of assembly, heterodimer with IFNAR2; forming the receptor for type I interferon. Interacts with TYK2. Interacts with STAT1 and STAT2; the interaction requires its phosphorylation at Tyr-482. Interacts (serine-phosphorylated form) with FBXW11, the substrate recognition component of a SCF (SKP1-CUL1-F-box protein) E3 ubiquitin-protein ligase complex. Interacts with SHMT2; this promotes interaction with ABRAXAS2 and the BRISC complex. Interacts with TRIM10; this interaction prevents association between IFNAR1 and TYK2. In terms of processing, ubiquitinated, leading to its internalization and degradation. Polyubiquitinated via 'Lys-48'-linked and 'Lys-63'-linked ubiquitin chains, leading to receptor internalization and lysosomal degradation. The 'Lys-63'-linked ubiquitin chains are cleaved off by the BRISC complex. Phosphorylated on tyrosine residues in response to interferon-binding: phosphorylation by TYK2 tyrosine kinase creates docking sites for STAT proteins. Phosphorylated on serine residues in response to interferon binding; this promotes interaction with FBXW11 and ubiquitination. Post-translationally, palmitoylation at Cys-464 is required for the activation of STAT1 and STAT2. Expressed in the endometrium. Expressed in all tissues examined except conceptus at day 15 of pregnancy.

It localises to the cell membrane. The protein resides in the late endosome. Its subcellular location is the lysosome. In terms of biological role, together with IFNAR2, forms the heterodimeric receptor for type I interferons (including interferons alpha, beta, epsilon, omega and kappa). Type I interferon binding activates the JAK-STAT signaling cascade, resulting in transcriptional activation or repression of interferon-regulated genes that encode the effectors of the interferon response. Mechanistically, type I interferon-binding brings the IFNAR1 and IFNAR2 subunits into close proximity with one another, driving their associated Janus kinases (JAKs) (TYK2 bound to IFNAR1 and JAK1 bound to IFNAR2) to cross-phosphorylate one another. The activated kinases phosphorylate specific tyrosine residues on the intracellular domains of IFNAR1 and IFNAR2, forming docking sites for the STAT transcription factors. STAT proteins are then phosphorylated by the JAKs, promoting their translocation into the nucleus to regulate expression of interferon-regulated genes. Can also act independently of IFNAR2: form an active IFNB1 receptor by itself and activate a signaling cascade that does not involve activation of the JAK-STAT pathway. This is Interferon alpha/beta receptor 1 (IFNAR1) from Ovis aries (Sheep).